The chain runs to 330 residues: Stimulated by retinoic acid gene 8 protein homolog (330 aa).

The Nuclear localization signal (NLS) signature appears at Arg50–Arg55. The stretch at Gln88–Ala112 forms a coiled coil.

Interacts with XPO1. Interacts with MEIOSIN. In terms of processing, phosphorylated. Expressed specifically in testis and fetal ovaries.

It localises to the cytoplasm. Its subcellular location is the nucleus. In terms of biological role, meiosis-inducer required for the transition into meiosis for both female and male germ cells. In female germ cells, acts downstream of ZGLP1 as a key effector of the meiotic program: required for premeiotic DNA replication and subsequent events in meiotic prophase. During spermatogenesis, next to its role in meiotic initiation, promotes (but is not required for) spermatogonial differentiation. In complex with MEIOSIN, directly activates the transcription of a subset of critical meiotic genes playing a central role in cell-cycle switching from mitosis to meiosis. This chain is Stimulated by retinoic acid gene 8 protein homolog, found in Homo sapiens (Human).